A 92-amino-acid chain; its full sequence is Small ribosomal subunit protein uS19 (92 aa).

Belongs to the universal ribosomal protein uS19 family.

In terms of biological role, protein S19 forms a complex with S13 that binds strongly to the 16S ribosomal RNA. This chain is Small ribosomal subunit protein uS19, found in Vibrio vulnificus (strain CMCP6).